Reading from the N-terminus, the 251-residue chain is Triosephosphate isomerase (251 aa).

9–11 (NWK) contributes to the substrate binding site. His96 acts as the Electrophile in catalysis. The active-site Proton acceptor is the Glu168. Substrate contacts are provided by residues Gly174, Ser214, and 235–236 (GG).

The protein belongs to the triosephosphate isomerase family. In terms of assembly, homodimer.

The protein resides in the cytoplasm. It carries out the reaction D-glyceraldehyde 3-phosphate = dihydroxyacetone phosphate. The protein operates within carbohydrate biosynthesis; gluconeogenesis. Its pathway is carbohydrate degradation; glycolysis; D-glyceraldehyde 3-phosphate from glycerone phosphate: step 1/1. Its function is as follows. Involved in the gluconeogenesis. Catalyzes stereospecifically the conversion of dihydroxyacetone phosphate (DHAP) to D-glyceraldehyde-3-phosphate (G3P). The protein is Triosephosphate isomerase of Cytophaga hutchinsonii (strain ATCC 33406 / DSM 1761 / CIP 103989 / NBRC 15051 / NCIMB 9469 / D465).